We begin with the raw amino-acid sequence, 176 residues long: Small ribosomal subunit protein uS5 (176 aa).

The S5 DRBM domain occupies 11–74 (LSEVLVDVNR…QAAKKKMMKV (64 aa)).

This sequence belongs to the universal ribosomal protein uS5 family. In terms of assembly, part of the 30S ribosomal subunit. Contacts proteins S4 and S8.

Its function is as follows. With S4 and S12 plays an important role in translational accuracy. Located at the back of the 30S subunit body where it stabilizes the conformation of the head with respect to the body. The protein is Small ribosomal subunit protein uS5 of Rickettsia bellii (strain RML369-C).